The sequence spans 219 residues: Probable nicotinate-nucleotide adenylyltransferase (219 aa).

This sequence belongs to the NadD family.

The enzyme catalyses nicotinate beta-D-ribonucleotide + ATP + H(+) = deamido-NAD(+) + diphosphate. It participates in cofactor biosynthesis; NAD(+) biosynthesis; deamido-NAD(+) from nicotinate D-ribonucleotide: step 1/1. Its function is as follows. Catalyzes the reversible adenylation of nicotinate mononucleotide (NaMN) to nicotinic acid adenine dinucleotide (NaAD). This chain is Probable nicotinate-nucleotide adenylyltransferase, found in Cronobacter sakazakii (strain ATCC BAA-894) (Enterobacter sakazakii).